The chain runs to 1184 residues: Fibulin-2 (1184 aa).

The first 27 residues, 1-27 (MVLLWEPAGAWLALGLALALGPSVAAA), serve as a signal peptide directing secretion. The interval 28-177 (APRQDCTGVE…ELICYQLPGC (150 aa)) is subdomain NA (Cys-rich). The tract at residues 28 to 444 (APRQDCTGVE…EGSTKDLIET (417 aa)) is n. A subdomain NB (Cys-free) region spans residues 178–444 (HGNFSDAEEG…EGSTKDLIET (267 aa)). The N-linked (GlcNAc...) asparagine glycan is linked to Asn-180. 2 disordered regions span residues 221-293 (VQAG…MAVT) and 399-437 (IPPT…PEGS). Residues 224–236 (GAGGPPAALGGGS) are compositionally biased toward gly residues. Over residues 252–261 (PRPTAAAALG) the composition is skewed to low complexity. Residues 276 to 288 (DSEEEEEEEEERE) are compositionally biased toward acidic residues. Phosphoserine is present on Ser-277. Over residues 423-436 (PNSVHSIPRSSPEG) the composition is skewed to polar residues. Disulfide bonds link Cys-445/Cys-472, Cys-446/Cys-479, Cys-459/Cys-480, Cys-489/Cys-518, Cys-502/Cys-519, Cys-521/Cys-545, Cys-522/Cys-552, Cys-535/Cys-553, Cys-608/Cys-620, Cys-616/Cys-629, Cys-631/Cys-644, Cys-683/Cys-693, Cys-689/Cys-702, Cys-704/Cys-717, Cys-723/Cys-736, Cys-730/Cys-745, Cys-751/Cys-762, Cys-768/Cys-781, Cys-775/Cys-790, Cys-796/Cys-808, Cys-814/Cys-827, Cys-821/Cys-836, Cys-843/Cys-856, Cys-862/Cys-875, Cys-869/Cys-884, Cys-886/Cys-899, Cys-905/Cys-917, Cys-913/Cys-926, Cys-928/Cys-941, Cys-947/Cys-956, Cys-952/Cys-965, Cys-967/Cys-980, Cys-986/Cys-998, Cys-994/Cys-1007, Cys-1009/Cys-1023, Cys-1029/Cys-1042, Cys-1036/Cys-1051, and Cys-1056/Cys-1068. Anaphylatoxin-like domains lie at 445–480 (CCAA…RHCC), 488–519 (SCMA…KQCC), and 521–553 (CCGL…LSCC). Asn-507 carries an N-linked (GlcNAc...) asparagine glycan. The EGF-like 1; calcium-binding domain maps to 604–645 (DQDECLLLPGELCQHLCINTVGSYHCACFPGFSLQDDGRTCR). In terms of domain architecture, EGF-like 2 spans 679 to 718 (QPNTCKDNGPCKQVCSTVGGSAICSCFPGYAIMADGVSCE). In terms of domain architecture, EGF-like 3; calcium-binding spans 719–763 (DINECVTDLHTCSRGEHCVNTLGSFHCYKALTCEPGYALKDGECE). In terms of domain architecture, EGF-like 4; calcium-binding spans 764–809 (DVDECAMGTHTCQPGFLCQNTKGSFYCQARQRCMDGFLQDPEGNCV). The EGF-like 5; calcium-binding domain occupies 810-857 (DINECTSLSEPCRPGFSCINTVGSYTCQRNPLICARGYHASDDGTKCV). Residues 858-900 (DVNECETGVHRCGEGQVCHNLPGSYRCDCKAGFQRDAFGRGCI) form the EGF-like 6; calcium-binding domain. The 42-residue stretch at 901–942 (DVNECWASPGRLCQHTCENTLGSYRCSCASGFLLAADGKRCE) folds into the EGF-like 7; calcium-binding domain. The EGF-like 8; calcium-binding domain maps to 943-981 (DVNECEAQRCSQECANIYGSYQCYCRQGYQLAEDGHTCT). Residues 982-1024 (DIDECAQGAGILCTFRCLNVPGSYQCACPEQGYTMTANGRSCK) form the EGF-like 9; calcium-binding domain. Residues 1025–1069 (DVDECALGTHNCSEAETCHNIQGSFRCLRFECPPNYVQVSKTKCE) enclose the EGF-like 10; calcium-binding domain. The N-linked (GlcNAc...) asparagine glycan is linked to Asn-1035. The domain III stretch occupies residues 1070–1184 (RTTCHDFLEC…MHIFFTTFAL (115 aa)).

Belongs to the fibulin family. Homotrimer; disulfide-linked. Interacts with LAMA2. Interacts with FBN1 (via N-terminal domain). Forms a ternary complex with ELN and FBN1. O-glycosylated with core 1 or possibly core 8 glycans. It is unsure if the O-glycosylation is on Thr-347 or Ser-348. As to expression, component of both basement membranes and other connective tissues. Expressed in heart, placenta and ovary.

The protein localises to the secreted. It is found in the extracellular space. It localises to the extracellular matrix. Its binding to fibronectin and some other ligands is calcium dependent. May act as an adapter that mediates the interaction between FBN1 and ELN. The polypeptide is Fibulin-2 (FBLN2) (Homo sapiens (Human)).